Consider the following 255-residue polypeptide: Indole-3-glycerol phosphate synthase (255 aa).

It belongs to the TrpC family.

It carries out the reaction 1-(2-carboxyphenylamino)-1-deoxy-D-ribulose 5-phosphate + H(+) = (1S,2R)-1-C-(indol-3-yl)glycerol 3-phosphate + CO2 + H2O. Its pathway is amino-acid biosynthesis; L-tryptophan biosynthesis; L-tryptophan from chorismate: step 4/5. In Streptococcus pneumoniae (strain Taiwan19F-14), this protein is Indole-3-glycerol phosphate synthase.